The primary structure comprises 250 residues: Triosephosphate isomerase (250 aa).

8–10 (NWK) is a binding site for substrate. Residue His-96 is the Electrophile of the active site. Glu-169 functions as the Proton acceptor in the catalytic mechanism. Substrate contacts are provided by residues Gly-175, Ser-214, and 235 to 236 (GG).

This sequence belongs to the triosephosphate isomerase family. As to quaternary structure, homodimer.

Its subcellular location is the cytoplasm. It carries out the reaction D-glyceraldehyde 3-phosphate = dihydroxyacetone phosphate. It participates in carbohydrate biosynthesis; gluconeogenesis. Its pathway is carbohydrate degradation; glycolysis; D-glyceraldehyde 3-phosphate from glycerone phosphate: step 1/1. In terms of biological role, involved in the gluconeogenesis. Catalyzes stereospecifically the conversion of dihydroxyacetone phosphate (DHAP) to D-glyceraldehyde-3-phosphate (G3P). This Oleidesulfovibrio alaskensis (strain ATCC BAA-1058 / DSM 17464 / G20) (Desulfovibrio alaskensis) protein is Triosephosphate isomerase.